Here is a 610-residue protein sequence, read N- to C-terminus: Diol dehydratase-reactivating factor large subunit (610 aa).

Asn11–Ser13 contributes to the ATP binding site. Residues Thr105, Asp166, and Asp183 each contribute to the Mg(2+) site. ATP is bound by residues Glu459–Lys462, Gly557–Ser558, and Arg591.

It belongs to the DdrA/PduG family. Component of the DDR complex, a heterotetramer of DdrA(2)/DdrB(2). The DDR complex interacts with the diol dehydratase complex in the presence of ADP but not ATP. Mg(2+) is required as a cofactor.

The enzyme catalyses ATP + H2O = ADP + phosphate + H(+). In terms of biological role, large subunit of the diol dehydratase-reactivating factor (DDR), which reactivates suicidally inhibited adenosylcobalamin-dependent diol dehydratase (DD, pddA, pddB, pddC). DDR acts as a chaperone, reactivating inactivated DD holoenzyme in the presence of ATP, Mg(2+) and free adenosylcobalamin (AdoCbl), by mediating the exchange of the tightly bound damaged cofactor AdoCbl for a free intact one. Reactivation takes place in two steps: ADP-dependent cobalamin release, then ATP-dependent dissociation of the DD apoenzyme-DDR complex. DDR has weak ATPase activity which is required for DD reactivation. This subunit contains the adenosine nucleotide binding site. Activates glycerol-inactivated, O2-inactivated holoenzyme and inactivated enzyme-cyanocobalamin complex. Also reactivates glycerol-inactivated hologlycerol dehydratase, a DD isozyme. In Klebsiella michiganensis (strain ATCC 8724 / DSM 4798 / JCM 20051 / NBRC 3318 / NRRL B-199 / KCTC 1686 / BUCSAV 143 / CCM 1901), this protein is Diol dehydratase-reactivating factor large subunit.